Consider the following 196-residue polypeptide: ATP-dependent Clp protease proteolytic subunit (196 aa).

Catalysis depends on Ser98, which acts as the Nucleophile. His123 is an active-site residue.

Belongs to the peptidase S14 family. As to quaternary structure, fourteen ClpP subunits assemble into 2 heptameric rings which stack back to back to give a disk-like structure with a central cavity, resembling the structure of eukaryotic proteasomes.

The protein localises to the cytoplasm. The enzyme catalyses Hydrolysis of proteins to small peptides in the presence of ATP and magnesium. alpha-casein is the usual test substrate. In the absence of ATP, only oligopeptides shorter than five residues are hydrolyzed (such as succinyl-Leu-Tyr-|-NHMec, and Leu-Tyr-Leu-|-Tyr-Trp, in which cleavage of the -Tyr-|-Leu- and -Tyr-|-Trp bonds also occurs).. Cleaves peptides in various proteins in a process that requires ATP hydrolysis. Has a chymotrypsin-like activity. Plays a major role in the degradation of misfolded proteins. The chain is ATP-dependent Clp protease proteolytic subunit from Acidobacterium capsulatum (strain ATCC 51196 / DSM 11244 / BCRC 80197 / JCM 7670 / NBRC 15755 / NCIMB 13165 / 161).